The sequence spans 212 residues: GTP cyclohydrolase 1 (212 aa).

Positions 103, 106, and 174 each coordinate Zn(2+).

Belongs to the GTP cyclohydrolase I family. Toroid-shaped homodecamer, composed of two pentamers of five dimers.

It catalyses the reaction GTP + H2O = 7,8-dihydroneopterin 3'-triphosphate + formate + H(+). It participates in cofactor biosynthesis; 7,8-dihydroneopterin triphosphate biosynthesis; 7,8-dihydroneopterin triphosphate from GTP: step 1/1. In Caulobacter vibrioides (strain ATCC 19089 / CIP 103742 / CB 15) (Caulobacter crescentus), this protein is GTP cyclohydrolase 1.